The chain runs to 248 residues: Probable transcriptional regulatory protein Mchl_0946 (248 aa).

The protein belongs to the TACO1 family.

The protein resides in the cytoplasm. This Methylorubrum extorquens (strain CM4 / NCIMB 13688) (Methylobacterium extorquens) protein is Probable transcriptional regulatory protein Mchl_0946.